The sequence spans 1022 residues: ATPase MORC2B (1022 aa).

Ala-2 bears the N-acetylalanine mark. ATP-binding positions include Asn-39, 87 to 89 (SAK), and 99 to 105 (RYGNGLK). Mg(2+) is bound at residue Asn-39. Residues 285–362 (KTRAEQEVKK…RDAKQQALKE (78 aa)) are a coiled coil. Lys-427 is a binding site for ATP. A CW-type zinc finger spans residues 490 to 544 (AMQVPTTIQCDLCLKWRTLPFQLSAVEEGYPINWVCSMNPDPEQDQCEAFELKQK). Zn(2+) is bound by residues Cys-499, Cys-502, Cys-525, and Cys-536. Positions 555 to 583 (KTQEERQKQLTEKIQQEQRKLKALKKIKP) form a coiled coil. Position 615 is a phosphoserine (Ser-615). Residue Lys-649 forms a Glycyl lysine isopeptide (Lys-Gly) (interchain with G-Cter in SUMO2) linkage. A phosphoserine mark is found at Ser-690, Ser-724, Ser-733, and Ser-737. Lys-758 is covalently cross-linked (Glycyl lysine isopeptide (Lys-Gly) (interchain with G-Cter in SUMO2)). 2 positions are modified to phosphoserine: Ser-768 and Ser-770. At Thr-827 the chain carries Phosphothreonine. A phosphoserine mark is found at Ser-846 and Ser-851. Lys-922 participates in a covalent cross-link: Glycyl lysine isopeptide (Lys-Gly) (interchain with G-Cter in SUMO2). Positions 962–1001 (QAKVSEESLRISQKKLQETEEKLQKLRTNIQTLLQMAQQG) form a coiled coil.

Interacts with Morc2a. As to expression, protein is abundant in testes but not detected in other adult tissues examined (at protein level). Detected in germ cells with a distinct developmental-specific expression pattern but not in somatic cells such as Sertoli cells.

It localises to the nucleus. It catalyses the reaction ATP + H2O = ADP + phosphate + H(+). Its function is as follows. Required for chromosomal synapsis and meiotic recombination in males and females. This Mus musculus (Mouse) protein is ATPase MORC2B.